The sequence spans 160 residues: Major strawberry allergen Fra a 1.07 (160 aa).

The protein belongs to the BetVI family. Phosphorylated in vivo. Phosphorylation prevents its activity as ribonuclease. Highly expressed in roots. Expressed a low levels in ripe red fruits.

Functionally, possesses ribonuclease activity in vitro. The chain is Major strawberry allergen Fra a 1.07 from Fragaria ananassa (Strawberry).